The primary structure comprises 1189 residues: Pyruvate carboxylase (1189 aa).

Residues 21–473 (TMNKILVANR…WTTFIDDTPE (453 aa)) form the Biotin carboxylation domain. Positions 139, 223, and 258 each coordinate ATP. An ATP-grasp domain is found at 143-340 (RNLAYAANVP…IVAAQIQIAA (198 aa)). The active site involves Arg-315. Residues 559 to 826 (LMIMDTTWRD…ETGIPEANAR (268 aa)) enclose the Pyruvate carboxyltransferase domain. Substrate is bound by residues 567 to 571 (RDAHQ) and Arg-640. Asp-568 contacts a divalent metal cation. A divalent metal cation-binding residues include Lys-736, His-766, and His-768. Lys-736 bears the N6-carboxylysine mark. A substrate-binding site is contributed by Thr-900. Residues 1099 to 1174 (KADAHNPNEI…DASDLIPKSS (76 aa)) form the Biotinyl-binding domain. At Lys-1140 the chain carries N6-biotinyllysine.

Biotin is required as a cofactor. It depends on Zn(2+) as a cofactor.

It is found in the cytoplasm. It carries out the reaction hydrogencarbonate + pyruvate + ATP = oxaloacetate + ADP + phosphate + H(+). It participates in carbohydrate biosynthesis; gluconeogenesis. In terms of biological role, pyruvate carboxylase catalyzes a 2-step reaction, involving the ATP-dependent carboxylation of the covalently attached biotin in the first step and the transfer of the carboxyl group to pyruvate in the second. This is Pyruvate carboxylase (PYC1) from Komagataella pastoris (Yeast).